The primary structure comprises 273 residues: MHEAQIRVAIAGAGGRMGRQLIQAAMAMEGVQLGAALEREGSSLLGSDAGELAGAGKSGVIVQSSLEAVKDDFDVFIDFTRPEGTLTHLAFCRQHGKGMVIGTTGFDDAGKQAIREASQEIAIVFAANFSVGVNVMLKLLEKAAKVMGDYSDIEIIEAHHRHKVDAPSGTALAMGEAIAGALDKDLKDCAVYSREGYTGERVPGTIGFATVRAGDIVGEHTAMFADIGERVEITHKASSRMTFANGALRSALWLKTKKNGLFDMRDVLGLDVL.

NAD(+) is bound by residues 12 to 17 and glutamate 38; that span reads GAGGRM. An NADP(+)-binding site is contributed by arginine 39. Residues 102–104 and 126–129 each bind NAD(+); these read GTT and AANF. Histidine 159 serves as the catalytic Proton donor/acceptor. Position 160 (histidine 160) interacts with (S)-2,3,4,5-tetrahydrodipicolinate. Catalysis depends on lysine 163, which acts as the Proton donor. 169–170 serves as a coordination point for (S)-2,3,4,5-tetrahydrodipicolinate; it reads GT.

The protein belongs to the DapB family. As to quaternary structure, homotetramer.

It localises to the cytoplasm. It carries out the reaction (S)-2,3,4,5-tetrahydrodipicolinate + NAD(+) + H2O = (2S,4S)-4-hydroxy-2,3,4,5-tetrahydrodipicolinate + NADH + H(+). The enzyme catalyses (S)-2,3,4,5-tetrahydrodipicolinate + NADP(+) + H2O = (2S,4S)-4-hydroxy-2,3,4,5-tetrahydrodipicolinate + NADPH + H(+). The protein operates within amino-acid biosynthesis; L-lysine biosynthesis via DAP pathway; (S)-tetrahydrodipicolinate from L-aspartate: step 4/4. Its function is as follows. Catalyzes the conversion of 4-hydroxy-tetrahydrodipicolinate (HTPA) to tetrahydrodipicolinate. The protein is 4-hydroxy-tetrahydrodipicolinate reductase of Salmonella dublin (strain CT_02021853).